The sequence spans 568 residues: Chaperonin homolog Hsp-60, mitochondrial (568 aa).

This sequence belongs to the chaperonin (HSP60) family.

The protein localises to the mitochondrion matrix. In terms of biological role, implicated in mitochondrial protein import and macromolecular assembly. May facilitate the correct folding of imported proteins. May also prevent misfolding and promote the refolding and proper assembly of unfolded polypeptides generated under stress conditions in the mitochondrial matrix. This chain is Chaperonin homolog Hsp-60, mitochondrial (hsp-60), found in Caenorhabditis elegans.